Here is a 416-residue protein sequence, read N- to C-terminus: Methylthioribose-1-phosphate isomerase (416 aa).

Residue Asp-280 is the Proton donor of the active site.

The protein belongs to the eIF-2B alpha/beta/delta subunits family. MtnA subfamily.

It localises to the cytoplasm. The protein resides in the nucleus. The enzyme catalyses 5-(methylsulfanyl)-alpha-D-ribose 1-phosphate = 5-(methylsulfanyl)-D-ribulose 1-phosphate. It participates in amino-acid biosynthesis; L-methionine biosynthesis via salvage pathway; L-methionine from S-methyl-5-thio-alpha-D-ribose 1-phosphate: step 1/6. Catalyzes the interconversion of methylthioribose-1-phosphate (MTR-1-P) into methylthioribulose-1-phosphate (MTRu-1-P). This Candida albicans (strain SC5314 / ATCC MYA-2876) (Yeast) protein is Methylthioribose-1-phosphate isomerase.